Consider the following 250-residue polypeptide: 2,3-bisphosphoglycerate-dependent phosphoglycerate mutase (250 aa).

Residues 10 to 17 (RHGESQWN), 23 to 24 (TG), Arg62, 89 to 92 (ERHY), Lys100, 116 to 117 (RR), and 185 to 186 (GN) each bind substrate. His11 acts as the Tele-phosphohistidine intermediate in catalysis. Catalysis depends on Glu89, which acts as the Proton donor/acceptor.

This sequence belongs to the phosphoglycerate mutase family. BPG-dependent PGAM subfamily. Homodimer.

The enzyme catalyses (2R)-2-phosphoglycerate = (2R)-3-phosphoglycerate. It participates in carbohydrate degradation; glycolysis; pyruvate from D-glyceraldehyde 3-phosphate: step 3/5. In terms of biological role, catalyzes the interconversion of 2-phosphoglycerate and 3-phosphoglycerate. This is 2,3-bisphosphoglycerate-dependent phosphoglycerate mutase from Yersinia enterocolitica serotype O:8 / biotype 1B (strain NCTC 13174 / 8081).